The chain runs to 968 residues: Chaperone protein ClpB3, chloroplastic (968 aa).

A chloroplast-targeting transit peptide spans 1–67; it reads MATATTTATA…RLDHRPFVVR (67 aa). One can recognise a Clp R domain in the interval 78-222; it reads TQQEFTEMAW…KSAIESIRGK (145 aa). 2 repeat regions span residues 82 to 147 and 159 to 222; these read FTEM…IQRQ and LGRD…IRGK. The interval 237 to 485 is i; the sequence is LEKYGKDLTA…KLKMEITSKP (249 aa). Residue 282–289 participates in ATP binding; it reads GEPGVGKT. A coiled-coil region spans residues 488–606; the sequence is LDELDRSVIK…NEYLSSGKSM (119 aa). The II stretch occupies residues 611 to 802; sequence VLGSDIAEIV…VIIMTSNVGS (192 aa). 685 to 692 contacts ATP; sequence GPTGVGKT.

It belongs to the ClpA/ClpB family.

It localises to the plastid. Its subcellular location is the chloroplast. Functionally, molecular chaperone essential for chloroplast development and seedling viability. Mediates internal thylakoid membrane formation and confers thermotolerance to chloroplasts during heat stress. The polypeptide is Chaperone protein ClpB3, chloroplastic (CLPB3) (Arabidopsis thaliana (Mouse-ear cress)).